A 440-amino-acid polypeptide reads, in one-letter code: 3-phosphoshikimate 1-carboxyvinyltransferase (440 aa).

Positions 28, 29, and 33 each coordinate 3-phosphoshikimate. Lys-28 is a phosphoenolpyruvate binding site. Phosphoenolpyruvate is bound by residues Gly-98 and Arg-126. 3-phosphoshikimate-binding residues include Ser-171, Gln-173, Asp-318, and Lys-345. Gln-173 lines the phosphoenolpyruvate pocket. Asp-318 functions as the Proton acceptor in the catalytic mechanism. Arg-349 and Arg-391 together coordinate phosphoenolpyruvate.

Belongs to the EPSP synthase family. Monomer.

It localises to the cytoplasm. It carries out the reaction 3-phosphoshikimate + phosphoenolpyruvate = 5-O-(1-carboxyvinyl)-3-phosphoshikimate + phosphate. It participates in metabolic intermediate biosynthesis; chorismate biosynthesis; chorismate from D-erythrose 4-phosphate and phosphoenolpyruvate: step 6/7. Its function is as follows. Catalyzes the transfer of the enolpyruvyl moiety of phosphoenolpyruvate (PEP) to the 5-hydroxyl of shikimate-3-phosphate (S3P) to produce enolpyruvyl shikimate-3-phosphate and inorganic phosphate. The chain is 3-phosphoshikimate 1-carboxyvinyltransferase from Anaeromyxobacter dehalogenans (strain 2CP-C).